The chain runs to 435 residues: Glutamate-1-semialdehyde 2,1-aminomutase (435 aa).

Position 266 is an N6-(pyridoxal phosphate)lysine (K266).

Belongs to the class-III pyridoxal-phosphate-dependent aminotransferase family. HemL subfamily. As to quaternary structure, homodimer. Pyridoxal 5'-phosphate serves as cofactor.

The protein resides in the cytoplasm. The enzyme catalyses (S)-4-amino-5-oxopentanoate = 5-aminolevulinate. It functions in the pathway porphyrin-containing compound metabolism; protoporphyrin-IX biosynthesis; 5-aminolevulinate from L-glutamyl-tRNA(Glu): step 2/2. This Coxiella burnetii (strain Dugway 5J108-111) protein is Glutamate-1-semialdehyde 2,1-aminomutase.